The sequence spans 394 residues: Flagellin B (394 aa).

This sequence belongs to the bacterial flagellin family.

The protein resides in the secreted. It localises to the bacterial flagellum. In terms of biological role, flagellin is the subunit protein which polymerizes to form the filaments of bacterial flagella. This is Flagellin B (flaB) from Rhizobium meliloti (strain 1021) (Ensifer meliloti).